An 864-amino-acid chain; its full sequence is Leucine--tRNA ligase (864 aa).

Residues 42-52 (PYPSGKLHMGH) carry the 'HIGH' region motif. The 'KMSKS' region signature appears at 624 to 628 (KMSKS). An ATP-binding site is contributed by K627.

This sequence belongs to the class-I aminoacyl-tRNA synthetase family.

Its subcellular location is the cytoplasm. The enzyme catalyses tRNA(Leu) + L-leucine + ATP = L-leucyl-tRNA(Leu) + AMP + diphosphate. This is Leucine--tRNA ligase from Burkholderia pseudomallei (strain 1710b).